A 564-amino-acid chain; its full sequence is MHSYDYWLIIAFFAVVLVPAPFLGRFYYKVMEGQRTWLTPVLGPVERACYRLSGVDEQQEQSWQKYMLALLAFNLAGFLLLFAILLFQDYLPLNPQKLPGQEWTLAFNTAVSFMTNTNWQSYSGEASLSYLSQMAGLTVQNFVSAATGLAVLVALCRGIGRKSTKTLGNFWVDMTRATLYGLLPLCLVLALFLVWQGVPQTFAHYVDAVTMQGVDQVIPLGPAASQIAIKQLGTNGGGFFGVNSAHPFEDPTAWANLFELAAIILIPVALVFTFGHYVKDLRQSRAILGCMLALFLIGGATSLWAEYQPNPTLNNPAVEQAAPLEGKEARFGTTGTVLWSVTTTAASNGSVNGMQDSLNPLSGMVALVNMMVGEVIFGGVGAGMYGMLLNVLIAVFLAGLMIGRTPEYLGKKLQAKEVQLLVVTLLVMPVGVLVLGAIAASLPGPAGAISNPGPHGFSQLLYAYTSASANNGSAFGGFSANTPFHNLMLGLGMLIGRFGYILPVLALAGSLAMKKTAPIGQNSFPTHGPLFVTLLTVTILLVGGLTFLPTLALGPIAEHLSMGF.

The next 10 helical transmembrane spans lie at 4-24 (YDYWLIIAFFAVVLVPAPFLG), 67-87 (MLALLAFNLAGFLLLFAILLF), 135-155 (AGLTVQNFVSAATGLAVLVAL), 179-199 (LYGLLPLCLVLALFLVWQGVP), 254-274 (WANLFELAAIILIPVALVFTF), 286-306 (AILGCMLALFLIGGATSLWAE), 382-402 (AGMYGMLLNVLIAVFLAGLMI), 420-440 (LLVVTLLVMPVGVLVLGAIAA), 487-507 (LMLGLGMLIGRFGYILPVLAL), and 528-548 (GPLFVTLLTVTILLVGGLTFL).

Belongs to the KdpA family. The system is composed of three essential subunits: KdpA, KdpB and KdpC.

The protein localises to the cell inner membrane. Part of the high-affinity ATP-driven potassium transport (or Kdp) system, which catalyzes the hydrolysis of ATP coupled with the electrogenic transport of potassium into the cytoplasm. This subunit binds the periplasmic potassium ions and delivers the ions to the membrane domain of KdpB through an intramembrane tunnel. The chain is Potassium-transporting ATPase potassium-binding subunit from Pseudomonas fluorescens (strain SBW25).